Here is a 244-residue protein sequence, read N- to C-terminus: uncharacterized protein (244 aa).

In terms of domain architecture, HTH gntR-type spans Val-12–Lys-80. Residues Glu-40 to Ala-59 constitute a DNA-binding region (H-T-H motif).

This is an uncharacterized protein from Rhizobium meliloti (strain 1021) (Ensifer meliloti).